The primary structure comprises 128 residues: Lysozyme C-1 (128 aa).

Residues 1 to 128 (KVYDRCEFAR…VSQYIRGCKL (128 aa)) form the C-type lysozyme domain. Disulfide bonds link C6–C126, C30–C114, C63–C79, and C75–C93. Active-site residues include E35 and D51.

This sequence belongs to the glycosyl hydrolase 22 family. Monomer.

The protein resides in the secreted. The enzyme catalyses Hydrolysis of (1-&gt;4)-beta-linkages between N-acetylmuramic acid and N-acetyl-D-glucosamine residues in a peptidoglycan and between N-acetyl-D-glucosamine residues in chitodextrins.. Lysozymes have primarily a bacteriolytic function; those in tissues and body fluids are associated with the monocyte-macrophage system and enhance the activity of immunoagents. This Sus scrofa (Pig) protein is Lysozyme C-1.